The primary structure comprises 830 residues: Protein translocase subunit SecA (830 aa).

Residues glutamine 86, 104–108 (GEGKT), and aspartate 491 contribute to the ATP site. The Zn(2+) site is built by cysteine 813, cysteine 815, cysteine 824, and cysteine 825.

It belongs to the SecA family. As to quaternary structure, monomer and homodimer. Part of the essential Sec protein translocation apparatus which comprises SecA, SecYEG and auxiliary proteins SecDF. Other proteins may also be involved. Zn(2+) serves as cofactor.

It localises to the cell membrane. It is found in the cytoplasm. The enzyme catalyses ATP + H2O + cellular proteinSide 1 = ADP + phosphate + cellular proteinSide 2.. Part of the Sec protein translocase complex. Interacts with the SecYEG preprotein conducting channel. Has a central role in coupling the hydrolysis of ATP to the transfer of proteins into and across the cell membrane, serving as an ATP-driven molecular motor driving the stepwise translocation of polypeptide chains across the membrane. This Syntrophomonas wolfei subsp. wolfei (strain DSM 2245B / Goettingen) protein is Protein translocase subunit SecA.